A 211-amino-acid chain; its full sequence is Pyridoxine/pyridoxamine 5'-phosphate oxidase (211 aa).

Residues 8–11 (RNEY) and K66 each bind substrate. Residues 61–66 (RVVLLK), 76–77 (FT), K83, and Q105 contribute to the FMN site. Substrate-binding residues include Y123, R127, and S131. FMN-binding positions include 140 to 141 (QS) and W184. 190-192 (RLH) contacts substrate. Residue R194 coordinates FMN.

It belongs to the pyridoxamine 5'-phosphate oxidase family. As to quaternary structure, homodimer. The cofactor is FMN.

It catalyses the reaction pyridoxamine 5'-phosphate + O2 + H2O = pyridoxal 5'-phosphate + H2O2 + NH4(+). The enzyme catalyses pyridoxine 5'-phosphate + O2 = pyridoxal 5'-phosphate + H2O2. The protein operates within cofactor metabolism; pyridoxal 5'-phosphate salvage; pyridoxal 5'-phosphate from pyridoxamine 5'-phosphate: step 1/1. It functions in the pathway cofactor metabolism; pyridoxal 5'-phosphate salvage; pyridoxal 5'-phosphate from pyridoxine 5'-phosphate: step 1/1. Its function is as follows. Catalyzes the oxidation of either pyridoxine 5'-phosphate (PNP) or pyridoxamine 5'-phosphate (PMP) into pyridoxal 5'-phosphate (PLP). The sequence is that of Pyridoxine/pyridoxamine 5'-phosphate oxidase from Mannheimia succiniciproducens (strain KCTC 0769BP / MBEL55E).